A 238-amino-acid chain; its full sequence is Ribonuclease PH (238 aa).

Phosphate contacts are provided by residues R86 and 124–126 (GTR).

The protein belongs to the RNase PH family. Homohexameric ring arranged as a trimer of dimers.

It carries out the reaction tRNA(n+1) + phosphate = tRNA(n) + a ribonucleoside 5'-diphosphate. Phosphorolytic 3'-5' exoribonuclease that plays an important role in tRNA 3'-end maturation. Removes nucleotide residues following the 3'-CCA terminus of tRNAs; can also add nucleotides to the ends of RNA molecules by using nucleoside diphosphates as substrates, but this may not be physiologically important. Probably plays a role in initiation of 16S rRNA degradation (leading to ribosome degradation) during starvation. This is Ribonuclease PH from Edwardsiella ictaluri (strain 93-146).